Consider the following 578-residue polypeptide: Adhesion G protein-coupled receptor A1 (578 aa).

Topologically, residues 1-22 (MTQWDLKTVLSLPQYPGEFLHP) are extracellular. The chain crosses the membrane as a helical span at residues 23–43 (VVYACTAVMLLCLLASVITYI). Over 44 to 56 (LHQSAIRISRKGR) the chain is Cytoplasmic. Residues 57-77 (HALLNFCFHAALTFTVFAGGI) form a helical membrane-spanning segment. Residues 78–87 (NRTQHPILCQ) are Extracellular-facing. A helical membrane pass occupies residues 88–108 (AVGIALHYSTLSTMLWIGVTA). The Cytoplasmic segment spans residues 109 to 137 (RNIYKQVTKKALPCPGADQPPYPKQPLLR). The chain crosses the membrane as a helical span at residues 138-158 (FYLISGGVPFIICGVTAATNI). The Extracellular segment spans residues 159–178 (RNYGTEDEDVAYCWMAWEPS). The chain crosses the membrane as a helical span at residues 179 to 199 (LGAFYGPAAFIALVTCVYFLC). Over 200–262 (TYVQLRRHPE…NEHSFKAQLR (63 aa)) the chain is Cytoplasmic. Residues 216–236 (ERTEEQQRLAVPESGHRHGVR) are disordered. Residues 263–283 (AAAFTLFLFTATWTFGALAVS) traverse the membrane as a helical segment. Topologically, residues 284-289 (QGHFLD) are extracellular. The chain crosses the membrane as a helical span at residues 290-310 (MIFSCLYGAFCVTLGLFVLIH). Disordered stretches follow at residues 463 to 486 (PSSLDGSPHSSRSESPTSSLEGPM) and 537 to 578 (SLPF…ETTV). Over residues 469–481 (SPHSSRSESPTSS) the composition is skewed to low complexity. Residues 537–548 (SLPFGGPSQNGL) show a composition bias toward polar residues.

This sequence belongs to the G-protein coupled receptor 2 family. Adhesion G-protein coupled receptor (ADGR) subfamily. Predominantly expressed in CNS.

The protein resides in the membrane. This chain is Adhesion G protein-coupled receptor A1, found in Mus musculus (Mouse).